The primary structure comprises 297 residues: Ribonuclease HIII (297 aa).

Residues 81-297 (IPIIGTDEVG…NTKKAQALLK (217 aa)) form the RNase H type-2 domain. A divalent metal cation-binding residues include Asp-87, Glu-88, and Asp-192.

It belongs to the RNase HII family. RnhC subfamily. It depends on Mn(2+) as a cofactor. Mg(2+) serves as cofactor.

It is found in the cytoplasm. The enzyme catalyses Endonucleolytic cleavage to 5'-phosphomonoester.. In terms of biological role, endonuclease that specifically degrades the RNA of RNA-DNA hybrids. The chain is Ribonuclease HIII from Streptococcus agalactiae serotype Ia (strain ATCC 27591 / A909 / CDC SS700).